A 389-amino-acid polypeptide reads, in one-letter code: Succinate--CoA ligase [ADP-forming] subunit beta (389 aa).

Positions 9–244 constitute an ATP-grasp domain; the sequence is KQLLAEYGIP…KTQEDETEVT (236 aa). ATP is bound by residues Lys46, 53–55, Gly102, and Glu107; that span reads GRG. Mg(2+)-binding residues include Asn199 and Asp213. Substrate contacts are provided by residues Asn264 and 321–323; that span reads GIV.

This sequence belongs to the succinate/malate CoA ligase beta subunit family. Heterotetramer of two alpha and two beta subunits. Mg(2+) is required as a cofactor.

It carries out the reaction succinate + ATP + CoA = succinyl-CoA + ADP + phosphate. The catalysed reaction is GTP + succinate + CoA = succinyl-CoA + GDP + phosphate. It functions in the pathway carbohydrate metabolism; tricarboxylic acid cycle; succinate from succinyl-CoA (ligase route): step 1/1. In terms of biological role, succinyl-CoA synthetase functions in the citric acid cycle (TCA), coupling the hydrolysis of succinyl-CoA to the synthesis of either ATP or GTP and thus represents the only step of substrate-level phosphorylation in the TCA. The beta subunit provides nucleotide specificity of the enzyme and binds the substrate succinate, while the binding sites for coenzyme A and phosphate are found in the alpha subunit. This Xanthomonas axonopodis pv. citri (strain 306) protein is Succinate--CoA ligase [ADP-forming] subunit beta.